The chain runs to 130 residues: Small ribosomal subunit protein bS16 (130 aa).

Residues Ala80–Glu130 are disordered. Over residues Lys99 to Ala109 the composition is skewed to basic and acidic residues. Residues Lys110–Glu130 show a composition bias toward low complexity.

Belongs to the bacterial ribosomal protein bS16 family.

The chain is Small ribosomal subunit protein bS16 from Jannaschia sp. (strain CCS1).